Here is a 214-residue protein sequence, read N- to C-terminus: Small ribosomal subunit protein uS5 (214 aa).

The 64-residue stretch at 54–117 (LKYEVVDIKV…RDAKMNILPV (64 aa)) folds into the S5 DRBM domain.

This sequence belongs to the universal ribosomal protein uS5 family. Part of the 30S ribosomal subunit. Contacts protein S4.

With S4 and S12 plays an important role in translational accuracy. The polypeptide is Small ribosomal subunit protein uS5 (Saccharolobus islandicus (strain Y.N.15.51 / Yellowstone #2) (Sulfolobus islandicus)).